Reading from the N-terminus, the 488-residue chain is Cruciferin (488 aa).

A signal peptide spans 1 to 23 (MARLSSLLSFSLALLTFLHGSTA). Intrachain disulfides connect Cys-30–Cys-63 and Cys-105–Cys-305. Cupin type-1 domains are found at residues 35–262 (LNAL…RTAQ) and 311–460 (DNLD…EEAR). A disordered region spans residues 116-163 (QPSGGSPFGEGQGQGQQGQGQGHQGQGQGQQGQQGQQGQQSQGQGFRD). The segment covering 121 to 147 (SPFGEGQGQGQQGQGQGHQGQGQGQQG) has biased composition (gly residues). Low complexity predominate over residues 148 to 160 (QQGQQGQQSQGQG).

It belongs to the 11S seed storage protein (globulins) family. As to quaternary structure, hexamer; each subunit is composed of an acidic and a basic chain derived from a single precursor and linked by a disulfide bond.

It localises to the rough endoplasmic reticulum. Functionally, this is a seed storage protein. This chain is Cruciferin (CRUA), found in Brassica napus (Rape).